The following is a 448-amino-acid chain: MSKRAYFGTDGIRGQANKHPMTAEVALRVGLAAGKLFRSQDERRHLVVIGKDTRLSGYMIEPALVAGLTSVGLDVRLFGPLPTPAVAMMTRSMRADLGIMISASHNSFADNGIKLFGPDGYKLSDAQELGIEALMDQGLQEGLAAPRELGRVKRIDDAQARYVEIVKATFPRHLNLSGLRIVIDCANGAAYKVAPTALYELGAEVITLGVSPDGTNINEECGSTHPEAMAKMVREYRADIGIALDGDADRLVICDEKGVVVDGDQIMAIIAAASHKAGTLKGGGVVATVMSNLGLERQLNTMGLSLERTAVGDRYVMQRMREGGFNVGGEQSGHLILSDFSTTGDGLIAALQVLAVMVETDKPMSALGRQFEPVPQLLENVRFVGGKPLEAAAVKEAIADGEAQLNGAGRIVVRASGTEPLIRIMAEGDDPALVKKVVKSIASAVKAA.

Residue Ser-104 is the Phosphoserine intermediate of the active site. Mg(2+) is bound by residues Ser-104, Asp-245, Asp-247, and Asp-249. Ser-104 bears the Phosphoserine mark.

It belongs to the phosphohexose mutase family. Requires Mg(2+) as cofactor. Post-translationally, activated by phosphorylation.

It catalyses the reaction alpha-D-glucosamine 1-phosphate = D-glucosamine 6-phosphate. Its function is as follows. Catalyzes the conversion of glucosamine-6-phosphate to glucosamine-1-phosphate. This Caulobacter vibrioides (strain ATCC 19089 / CIP 103742 / CB 15) (Caulobacter crescentus) protein is Phosphoglucosamine mutase.